A 211-amino-acid polypeptide reads, in one-letter code: C-type lectin domain-containing protein 158 (211 aa).

The signal sequence occupies residues 1 to 16 (MQKFILSAFVVALVAA).

The polypeptide is C-type lectin domain-containing protein 158 (clec-158) (Caenorhabditis elegans).